The sequence spans 152 residues: Large ribosomal subunit protein bL9 (152 aa).

Belongs to the bacterial ribosomal protein bL9 family.

In terms of biological role, binds to the 23S rRNA. The polypeptide is Large ribosomal subunit protein bL9 (Picosynechococcus sp. (strain ATCC 27264 / PCC 7002 / PR-6) (Agmenellum quadruplicatum)).